Reading from the N-terminus, the 267-residue chain is Energy-coupling factor transporter transmembrane protein EcfT (267 aa).

5 consecutive transmembrane segments (helical) span residues 26–46 (IILT…WGYL), 73–93 (ILFI…GTVI), 116–136 (LFLL…IALT), 151–171 (VPVH…PTLL), and 247–267 (LVTG…YVFF).

It belongs to the energy-coupling factor EcfT family. Forms a stable energy-coupling factor (ECF) transporter complex composed of 2 membrane-embedded substrate-binding proteins (S component), 2 ATP-binding proteins (A component) and 2 transmembrane proteins (T component). May be able to interact with more than 1 S component at a time.

It localises to the cell membrane. Transmembrane (T) component of an energy-coupling factor (ECF) ABC-transporter complex. Unlike classic ABC transporters this ECF transporter provides the energy necessary to transport a number of different substrates. This chain is Energy-coupling factor transporter transmembrane protein EcfT, found in Ruminiclostridium cellulolyticum (strain ATCC 35319 / DSM 5812 / JCM 6584 / H10) (Clostridium cellulolyticum).